Consider the following 550-residue polypeptide: Vacuolar protein 8 (550 aa).

G2 is lipidated: N-myristoyl glycine. Residues C4 and C7 are each lipidated (S-palmitoyl cysteine). ARM repeat units lie at residues 75–114 (TEKD…NLAV), 116–155 (AENK…NLAT), 157–196 (DENK…NMTH), 198–237 (YENR…NIAV), 241–280 (HRKR…NLAS), 282–321 (ERYQ…NISI), 323–363 (PLNE…NLAA), and 454–493 (FIEC…QLLE). A Phosphothreonine modification is found at T548. The residue at position 550 (S550) is a Phosphoserine.

It belongs to the beta-catenin family.

It localises to the golgi apparatus membrane. The protein resides in the vacuole membrane. Its function is as follows. Functions in both vacuole inheritance and protein targeting from the cytoplasm to vacuole. The chain is Vacuolar protein 8 (vac8) from Schizosaccharomyces pombe (strain 972 / ATCC 24843) (Fission yeast).